The following is a 215-amino-acid chain: Reticulon-like protein B14 (215 aa).

The Reticulon domain maps to F31–T211. Transmembrane regions (helical) follow at residues K41–E61, Y62–W82, and L141–F161.

The protein resides in the endoplasmic reticulum membrane. In Arabidopsis thaliana (Mouse-ear cress), this protein is Reticulon-like protein B14 (RTNLB14).